A 176-amino-acid chain; its full sequence is MIRTKNIFLIGPVGAGKSTIGKQLAKQLKLEFIDSDDVIEKKCGVDINWIFDLEGEEGFRKREREVIAEILAEKQNIVLATGGGAILDPETRSLLSSRGKVVYLEATIEQQLERTSKDTKRPLLRVDDKRPVLEQLMAEREPLYRSIADVVVETNGATVKNIVNKISTFLVEETIL.

Residue G14–T19 coordinates ATP. S18 contacts Mg(2+). Residues D36, R60, and G83 each coordinate substrate. R121 provides a ligand contact to ATP. Position 140 (R140) interacts with substrate.

It belongs to the shikimate kinase family. In terms of assembly, monomer. The cofactor is Mg(2+).

It localises to the cytoplasm. It catalyses the reaction shikimate + ATP = 3-phosphoshikimate + ADP + H(+). It participates in metabolic intermediate biosynthesis; chorismate biosynthesis; chorismate from D-erythrose 4-phosphate and phosphoenolpyruvate: step 5/7. Functionally, catalyzes the specific phosphorylation of the 3-hydroxyl group of shikimic acid using ATP as a cosubstrate. This is Shikimate kinase from Francisella tularensis subsp. tularensis (strain FSC 198).